A 354-amino-acid polypeptide reads, in one-letter code: Uroporphyrinogen decarboxylase (354 aa).

Substrate is bound by residues 27 to 31 (RQAGR), Asp77, Tyr154, Thr209, and His327.

This sequence belongs to the uroporphyrinogen decarboxylase family. Homodimer.

Its subcellular location is the cytoplasm. The enzyme catalyses uroporphyrinogen III + 4 H(+) = coproporphyrinogen III + 4 CO2. It functions in the pathway porphyrin-containing compound metabolism; protoporphyrin-IX biosynthesis; coproporphyrinogen-III from 5-aminolevulinate: step 4/4. Functionally, catalyzes the decarboxylation of four acetate groups of uroporphyrinogen-III to yield coproporphyrinogen-III. In Actinobacillus pleuropneumoniae serotype 5b (strain L20), this protein is Uroporphyrinogen decarboxylase.